The following is a 1488-amino-acid chain: Chromosome partition protein MukB (1488 aa).

34–41 (GGNGAGKS) is an ATP binding site. Coiled-coil stretches lie at residues 326–418 (LEAD…QYNQ), 444–472 (LDTFQAKEQEATEKLLSLEQKMSVAQTAH), and 509–602 (RHLA…QRAP). A flexible hinge region spans residues 666 to 783 (PGGAEDQRLN…SLPIFGRAAR (118 aa)). Coiled coils occupy residues 835–923 (EAEI…AKLE), 977–1116 (EMLS…AKAG), and 1209–1265 (VEAI…LQSV). The tract at residues 1049–1074 (ADSGAEERARQRRDELHAQLSNNRSR) is disordered. The segment covering 1051-1065 (SGAEERARQRRDELH) has biased composition (basic and acidic residues).

It belongs to the SMC family. MukB subfamily. In terms of assembly, homodimerization via its hinge domain. Binds to DNA via its C-terminal region. Interacts, and probably forms a ternary complex, with MukE and MukF via its C-terminal region. The complex formation is stimulated by calcium or magnesium. Interacts with tubulin-related protein FtsZ.

Its subcellular location is the cytoplasm. It is found in the nucleoid. Its function is as follows. Plays a central role in chromosome condensation, segregation and cell cycle progression. Functions as a homodimer, which is essential for chromosome partition. Involved in negative DNA supercoiling in vivo, and by this means organize and compact chromosomes. May achieve or facilitate chromosome segregation by condensation DNA from both sides of a centrally located replisome during cell division. The polypeptide is Chromosome partition protein MukB (Salmonella typhi).